The chain runs to 152 residues: 3-hydroxyacyl-[acyl-carrier-protein] dehydratase FabZ (152 aa).

His57 is a catalytic residue.

It belongs to the thioester dehydratase family. FabZ subfamily.

It localises to the cytoplasm. It catalyses the reaction a (3R)-hydroxyacyl-[ACP] = a (2E)-enoyl-[ACP] + H2O. Functionally, involved in unsaturated fatty acids biosynthesis. Catalyzes the dehydration of short chain beta-hydroxyacyl-ACPs and long chain saturated and unsaturated beta-hydroxyacyl-ACPs. This chain is 3-hydroxyacyl-[acyl-carrier-protein] dehydratase FabZ, found in Bradyrhizobium sp. (strain BTAi1 / ATCC BAA-1182).